Consider the following 435-residue polypeptide: Nuclear hormone receptor family member nhr-14 (435 aa).

Residues alanine 17–asparagine 92 constitute a DNA-binding region (nuclear receptor). 2 NR C4-type zinc fingers span residues cysteine 20–cysteine 40 and cysteine 56–cysteine 80. Residues glutamine 91 to valine 126 form a disordered region. Residues glycine 107–threonine 119 are compositionally biased toward polar residues. Residues valine 131–glutamate 355 form the NR LBD domain.

This sequence belongs to the nuclear hormone receptor family. Expressed in intestine and head neurons in young adults.

The protein localises to the nucleus. Its function is as follows. Orphan nuclear receptor. Transcriptional repressor of intestinal metal transporter smf-3 and genes of the innate immune response. Inhibits nuclear localization of transcription factor pqm-1; in response to pathogen stress, may facilitate translocation of pqm-1, leading to transcriptional activation of genes involved in innate immunity and iron uptake. The sequence is that of Nuclear hormone receptor family member nhr-14 (nhr-14) from Caenorhabditis elegans.